The sequence spans 108 residues: UPF0060 membrane protein YnfA (108 aa).

Topologically, residues 1 to 5 are periplasmic; it reads MIKTT. The chain crosses the membrane as a helical span at residues 6–26; it reads LLFFATALCEIIGCFLPWLWL. Over 27–30 the chain is Cytoplasmic; that stretch reads KRNA. The helical transmembrane segment at 31–51 threads the bilayer; it reads SIWLLLPAGISLALFVWLLTL. Topologically, residues 52–60 are periplasmic; it reads HPAASGRVY. A helical transmembrane segment spans residues 61–81; sequence AAYGGVYVCTALIWLRVVDGV. The Cytoplasmic segment spans residues 82–84; the sequence is KLT. Residues 85–105 traverse the membrane as a helical segment; the sequence is LYDWTGALIALCGMLIIVAGW. Over 106-108 the chain is Periplasmic; that stretch reads GRT.

Belongs to the UPF0060 family.

The protein localises to the cell inner membrane. The polypeptide is UPF0060 membrane protein YnfA (Escherichia coli O127:H6 (strain E2348/69 / EPEC)).